A 229-amino-acid polypeptide reads, in one-letter code: LexA repressor (229 aa).

A DNA-binding region (H-T-H motif) is located at residues 26–46 (FDEMKEALDLASKSGIHRLIT). Residues serine 149 and lysine 187 each act as for autocatalytic cleavage activity in the active site.

It belongs to the peptidase S24 family. In terms of assembly, homodimer.

It catalyses the reaction Hydrolysis of Ala-|-Gly bond in repressor LexA.. Represses a number of genes involved in the response to DNA damage (SOS response), including recA and lexA. In the presence of single-stranded DNA, RecA interacts with LexA causing an autocatalytic cleavage which disrupts the DNA-binding part of LexA, leading to derepression of the SOS regulon and eventually DNA repair. This Phenylobacterium zucineum (strain HLK1) protein is LexA repressor.